A 65-amino-acid chain; its full sequence is DNA-directed RNA polymerase subunit Rpo10 (65 aa).

Residues C7, C10, C44, and C45 each coordinate Zn(2+).

Belongs to the archaeal Rpo10/eukaryotic RPB10 RNA polymerase subunit family. In terms of assembly, part of the RNA polymerase complex. Zn(2+) is required as a cofactor.

The protein localises to the cytoplasm. It catalyses the reaction RNA(n) + a ribonucleoside 5'-triphosphate = RNA(n+1) + diphosphate. Its function is as follows. DNA-dependent RNA polymerase (RNAP) catalyzes the transcription of DNA into RNA using the four ribonucleoside triphosphates as substrates. The chain is DNA-directed RNA polymerase subunit Rpo10 from Pyrobaculum arsenaticum (strain DSM 13514 / JCM 11321 / PZ6).